Here is a 466-residue protein sequence, read N- to C-terminus: MPQTLSASDMVTPGSLSPPTTEPTDGEQAGQPLLDGAPSSASLETLIQHLVPTADYYPEKAYIFTFLLSSRLFIEPRELLARVCHLCIEQQQLDKPVLDKARVRKFGPKLLQLLAEWTETFPRDFQEESTIGQLKDVVGRIAPCDETYRKRMHQLLQALHQKLAALRQGPEGLVSADKPISYRTKPPASIHRELLGVCSDPYTLAQQLTHVELERLRHIGPEEFVQAFVNKDPLASTKPCFSDKTSHLEAYVKWFNRLCYLVATEICMPAKKKQRAQVIEFFIDVARECFNIGNFNSLMAIISGMNMSPVSRLKKTWAKVKTAKFFILEHQMDPTGNFCNYRTALRGAAHRSLTAHSSREKIVIPFFSLLIKDIYFLNEGCANRLPNGHVNFEKFLELAKQVGEFITWKQVECPFEQDPSITHYLSTAPIFSEDGLYLASYESESPENQTEKERWKSLRSSILGKT.

Residues 1-23 are compositionally biased toward polar residues; the sequence is MPQTLSASDMVTPGSLSPPTTEP. Disordered regions lie at residues 1-35 and 443-466; these read MPQT…PLLD and SESP…LGKT. Residues 34–164 enclose the N-terminal Ras-GEF domain; that stretch reads LDGAPSSASL…LLQALHQKLA (131 aa). Positions 200–446 constitute a Ras-GEF domain; that stretch reads DPYTLAQQLT…YLASYESESP (247 aa).

Guanine nucleotide exchange factor (GEF). The sequence is that of Ras-GEF domain-containing family member 1C (RASGEF1C) from Macaca fascicularis (Crab-eating macaque).